The following is a 70-amino-acid chain: Testis-expressed protein 53 (70 aa).

Expressed in Testis.

In Homo sapiens (Human), this protein is Testis-expressed protein 53.